The primary structure comprises 308 residues: tRNA dimethylallyltransferase (308 aa).

Position 16–23 (16–23 (GPTASGKT)) interacts with ATP. A substrate-binding site is contributed by 18 to 23 (TASGKT). Positions 41 to 44 (DSQQ) are interaction with substrate tRNA.

The protein belongs to the IPP transferase family. As to quaternary structure, monomer. Mg(2+) serves as cofactor.

The catalysed reaction is adenosine(37) in tRNA + dimethylallyl diphosphate = N(6)-dimethylallyladenosine(37) in tRNA + diphosphate. In terms of biological role, catalyzes the transfer of a dimethylallyl group onto the adenine at position 37 in tRNAs that read codons beginning with uridine, leading to the formation of N6-(dimethylallyl)adenosine (i(6)A). The polypeptide is tRNA dimethylallyltransferase (Myxococcus xanthus (strain DK1622)).